A 1846-amino-acid polypeptide reads, in one-letter code: C2 domain-containing protein (1846 aa).

A disordered region spans residues 16–36 (NTEKEEGKNAEINENNDPNTQ). Basic and acidic residues predominate over residues 17-26 (TEKEEGKNAE). Residues 27 to 36 (INENNDPNTQ) are compositionally biased toward polar residues. Residues 497–623 (VPRYRQRGDI…FNEKNVRRNK (127 aa)) enclose the C2 domain. Composition is skewed to basic and acidic residues over residues 1193-1211 (DEHTDIDTEKKKHEKDNYK) and 1230-1243 (KDDHHHITDKKVSK). Disordered regions lie at residues 1193–1244 (DEHT…VSKS), 1346–1370 (KYTINEKRDDIKTKKKRSKEKKKQD), 1456–1635 (KNER…KKRV), 1652–1692 (NEKM…NNER), and 1827–1846 (EEPSSKKSPQKKKIVIVRKN). The stretch at 1349–1506 (INEKRDDIKT…DENMKEEQKM (158 aa)) forms a coiled coil. Composition is skewed to basic and acidic residues over residues 1456-1474 (KNERNKMEKSYKRMIQKDK), 1481-1629 (ESRD…MRRE), 1652-1663 (NEKMKKKEEKEE), and 1670-1692 (KEDIEDKYKIGKEASLDENNNER). The segment covering 1834-1846 (SPQKKKIVIVRKN) has biased composition (basic residues).

The protein localises to the membrane. Binds calcium and phospholipids. Regulates microneme secretion. This Plasmodium falciparum (isolate 3D7) protein is C2 domain-containing protein.